The primary structure comprises 354 residues: Sulfate/thiosulfate import ATP-binding protein CysA (354 aa).

Residues 3-237 (IEVRGLSKRF…PATPFVYGFL (235 aa)) enclose the ABC transporter domain. 35–42 (GPSGCGKT) serves as a coordination point for ATP.

Belongs to the ABC transporter superfamily. Sulfate/tungstate importer (TC 3.A.1.6) family. The complex is composed of two ATP-binding proteins (CysA), two transmembrane proteins (CysT and CysW) and a solute-binding protein (CysP).

Its subcellular location is the cell inner membrane. The catalysed reaction is sulfate(out) + ATP + H2O = sulfate(in) + ADP + phosphate + H(+). It catalyses the reaction thiosulfate(out) + ATP + H2O = thiosulfate(in) + ADP + phosphate + H(+). Functionally, part of the ABC transporter complex CysAWTP involved in sulfate/thiosulfate import. Responsible for energy coupling to the transport system. The protein is Sulfate/thiosulfate import ATP-binding protein CysA of Bordetella bronchiseptica (strain ATCC BAA-588 / NCTC 13252 / RB50) (Alcaligenes bronchisepticus).